Here is a 518-residue protein sequence, read N- to C-terminus: uncharacterized protein (518 aa).

This sequence belongs to the MG032/MG096/MG288 family.

This is an uncharacterized protein from Mycoplasma pneumoniae (strain ATCC 29342 / M129 / Subtype 1) (Mycoplasmoides pneumoniae).